A 574-amino-acid chain; its full sequence is Alpha-mannosidase I MNS5 (574 aa).

The Cytoplasmic portion of the chain corresponds to 1 to 9; the sequence is MSCPIHPRR. The helical; Signal-anchor for type II membrane protein transmembrane segment at 10-26 threads the bilayer; sequence LFLCLLISLTFFVVDPS. Residues 27 to 574 lie on the Lumenal side of the membrane; it reads SQHIEVKKKQ…VGYCGLWNPL (548 aa). N-linked (GlcNAc...) asparagine glycans are attached at residues Asn-89, Asn-107, and Asn-121. The active-site Proton donor is the Glu-134. An N-linked (GlcNAc...) asparagine glycan is attached at Asn-201. Asp-274 is a catalytic residue. The N-linked (GlcNAc...) asparagine glycan is linked to Asn-349. Catalysis depends on Glu-367, which acts as the Proton donor. The active site involves Glu-388. Residue Thr-471 coordinates Ca(2+). Residue Asn-494 is glycosylated (N-linked (GlcNAc...) asparagine).

The protein belongs to the glycosyl hydrolase 47 family. Ca(2+) serves as cofactor.

Its subcellular location is the endoplasmic reticulum membrane. It functions in the pathway protein modification; protein glycosylation. Its function is as follows. Can convert Man(9)GlcNAc(2) and Man(8)GlcNAc(2) into N-glycans with a terminal alpha-1,6-linked Man residue in the C-branch. Functions in the formation of unique N-glycan structures that are specifically recognized by components of the endoplasmic reticulum-associated degradation (ERAD) machinery, which leads to the degradation of misfolded glycoproteins. Most likely generates N-glycan signal on misfolded glycoproteins that is subsequently recognized by OS9. Required for ERAD of the heavily glycosylated and misfolded BRI1 variants BRI1-5 and BRI1-9. Does not seem to play role in N-glycan processing of correctly folded proteins destined for secretion. This Arabidopsis thaliana (Mouse-ear cress) protein is Alpha-mannosidase I MNS5 (MNS5).